We begin with the raw amino-acid sequence, 275 residues long: Adaptin ear-binding coat-associated protein 1 (275 aa).

The disordered stretch occupies residues 168–275; it reads AKKGGASKPR…APQPSNWVQF (108 aa). Positions 187–201 are enriched in pro residues; it reads LPPPPGGKVTIPPPS. Threonine 211 carries the post-translational modification Phosphothreonine. Residues 233-248 are compositionally biased toward low complexity; the sequence is SPAPVSTSAPAPVSTS. 2 short sequence motifs (WXXF motif) span residues 252–255 and 272–275; these read WGDF and WVQF. A compositionally biased stretch (polar residues) spans 256–275; sequence STASSSVPNQAPQPSNWVQF.

This sequence belongs to the NECAP family. As to quaternary structure, interacts with AP1G1 and AP2A1 components of the adapter protein complexes AP-1 and AP-2. Interacts with the GAE domain proteins GGA1, GGA2 and GGA3. Expressed primarily in brain (at protein level).

The protein localises to the cytoplasmic vesicle. It localises to the clathrin-coated vesicle membrane. Its subcellular location is the cell membrane. Involved in endocytosis. The polypeptide is Adaptin ear-binding coat-associated protein 1 (Necap1) (Mus musculus (Mouse)).